Reading from the N-terminus, the 382-residue chain is D-alanine--D-alanine ligase (382 aa).

Residues 139 to 348 form the ATP-grasp domain; the sequence is KRLMRDAGLP…PPALMDALIA (210 aa). 168–223 contributes to the ATP binding site; it reads EALESRTLFVKPANMGSSVGVSRVADAGQFDQALAHAFAYDEKILIERAVPRAREI. Asp-300, Glu-315, and Asn-317 together coordinate Mg(2+).

It belongs to the D-alanine--D-alanine ligase family. Mg(2+) is required as a cofactor. The cofactor is Mn(2+).

It localises to the cytoplasm. It catalyses the reaction 2 D-alanine + ATP = D-alanyl-D-alanine + ADP + phosphate + H(+). The protein operates within cell wall biogenesis; peptidoglycan biosynthesis. In terms of biological role, cell wall formation. In Methylobacterium sp. (strain 4-46), this protein is D-alanine--D-alanine ligase.